Consider the following 614-residue polypeptide: Vitamin B12 transporter BtuB (614 aa).

An N-terminal signal peptide occupies residues 1-20; it reads MIKKASLLTACSVTAFSAWA. The TonB box motif lies at 26 to 33; that stretch reads DTLVVTAN. The 115-residue stretch at 38–152 folds into the TBDR plug domain; the sequence is PRSTVLAPTT…IGGVVNIITT (115 aa). Cyanocob(III)alamin-binding positions include L83, S85, N92, and 110–111; that span reads VS. Positions 155–614 constitute a TBDR beta-barrel domain; that stretch reads HPGTEISAGW…EYTLSGSYTF (460 aa). The next 3 membrane-spanning stretches (beta stranded) occupy residues 158 to 165, 169 to 178, and 184 to 195; these read TEISAGWG, YQNYDVSTQQ, and TRVTLLGDYAHT. Residues D199, Q211, D213, and D215 each coordinate Ca(2+). Beta stranded transmembrane passes span 217 to 227 and 232 to 248; these read FLSKTLYGALE and DVWSGFVRGYGYDNRTN. Residues Y249 and D250 each contribute to the Ca(2+) site. A251 lines the cyanocob(III)alamin pocket. D261 serves as a coordination point for Ca(2+). 14 beta stranded membrane passes run 263–277, 279–296, 309–325, 328–337, 353–369, 371–381, 385–400, 403–417, 434–443, 449–458, 473–490, 494–509, 517–529, and 535–550; these read RKLYSQSWDAGLRYN, ELIKSQLITSYSHSKDYN, TLDEMKQYTVQWANNII, HGNIGAGVDW, YDQRNTGIYLTGLQQVG, FTFEGAGRSDD, FGRHGTWQTSAGWEFI, YRFIASYGTSYKAPN, KSKQWEGAFE, VNWRISGYRN, YYNEGKARIKGVEATANF, PLTHTVSYDYVDARNA, RRAKQQVKYQLDW, and DWGITYQYLGTRYDKD. T309 contacts cyanocob(III)alamin. R517 is a binding site for cyanocob(III)alamin. Residue Y551 coordinates cyanocob(III)alamin. Transmembrane regions (beta stranded) follow at residues 558 to 572, 585 to 596, and 602 to 614; these read TVKMGGVSLWDLAVA, IANLFDKDYETV, and AGREYTLSGSYTF. The TonB C-terminal box motif lies at 597 to 614; sequence YGYQTAGREYTLSGSYTF.

This sequence belongs to the TonB-dependent receptor family. BtuB (TC 1.B.14.3.1) subfamily.

It is found in the cell outer membrane. Functionally, involved in the active translocation of vitamin B12 (cyanocobalamin) across the outer membrane to the periplasmic space. It derives its energy for transport by interacting with the trans-periplasmic membrane protein TonB. The chain is Vitamin B12 transporter BtuB from Escherichia coli O1:K1 / APEC.